Consider the following 272-residue polypeptide: Petrobactin import ATP-binding protein FpuC (272 aa).

Residues 2–238 (ISVNKVFYAH…EMFQHIFGIE (237 aa)) form the ABC transporter domain. Residue 34-41 (GPNGSGKS) participates in ATP binding.

The protein belongs to the ABC transporter superfamily. As to quaternary structure, the complex is composed of two ATP-binding proteins (FpuC), two transmembrane proteins (FpuB) and a solute-binding protein (FpuA).

It localises to the cell membrane. The catalysed reaction is a Fe(III)-siderophore(out) + ATP + H2O = a Fe(III)-siderophore(in) + ADP + phosphate + H(+). Its function is as follows. Part of an ABC transporter complex involved in ferric-petrobactin uptake. Probably responsible for energy coupling to the transport system. This is Petrobactin import ATP-binding protein FpuC from Bacillus anthracis.